The following is a 154-amino-acid chain: DNA gyrase inhibitor (154 aa).

Belongs to the DNA gyrase inhibitor family. As to quaternary structure, interacts with DNA gyrase.

The protein resides in the cytoplasm. Its function is as follows. Inhibits the supercoiling activity of DNA gyrase. Acts by inhibiting DNA gyrase at an early step, prior to (or at the step of) binding of DNA by the gyrase. It protects cells against toxins that target DNA gyrase, by inhibiting activity of these toxins and reducing the formation of lethal double-strand breaks in the cell. The polypeptide is DNA gyrase inhibitor (Pectobacterium carotovorum subsp. carotovorum (strain PC1)).